Here is a 544-residue protein sequence, read N- to C-terminus: Flagellar hook-associated protein 1 (544 aa).

Belongs to the flagella basal body rod proteins family.

The protein localises to the secreted. It is found in the bacterial flagellum. The sequence is that of Flagellar hook-associated protein 1 (flgK) from Buchnera aphidicola subsp. Schizaphis graminum (strain Sg).